The chain runs to 344 residues: MGGLMKKNTLILGIESSCDETAASVVKNGNEIISSVVASQIESHKRFGGVVPEIASRHHVEQITLVIEEALKQANVTMDDLDGIAVTEGPGLVGALLIGVNAAKTLAFMHNLPLVGVHHIAGHIYANRFETEFKFPLLSLVVSGGHTELVLMKADNEFEIIGETRDDAAGEAYDKVARTLGLAYPGGVQIDKLAKDGEDTFHFPRAMMDEGSFDFSFSGLKSSFINTLHNLRQRGEEPNPNDMAASFQASVVDVLVSKTIRAAKQYDVKQLLLAGGVAANQGLRERLIQEVKLELPETELIIPPLALCGDNAAMIAAAGTVSFLQGKRSGFDMNANPGLLLEDI.

Fe cation contacts are provided by His-119 and His-123. Residues 141 to 145 (VVSGG), Asp-174, Gly-187, Asp-191, and Asn-280 contribute to the substrate site. Residue Asp-310 coordinates Fe cation.

Belongs to the KAE1 / TsaD family. The cofactor is Fe(2+).

It localises to the cytoplasm. It carries out the reaction L-threonylcarbamoyladenylate + adenosine(37) in tRNA = N(6)-L-threonylcarbamoyladenosine(37) in tRNA + AMP + H(+). In terms of biological role, required for the formation of a threonylcarbamoyl group on adenosine at position 37 (t(6)A37) in tRNAs that read codons beginning with adenine. Is involved in the transfer of the threonylcarbamoyl moiety of threonylcarbamoyl-AMP (TC-AMP) to the N6 group of A37, together with TsaE and TsaB. TsaD likely plays a direct catalytic role in this reaction. This is tRNA N6-adenosine threonylcarbamoyltransferase from Listeria monocytogenes serotype 4b (strain CLIP80459).